The following is a 320-amino-acid chain: Ferrochelatase (320 aa).

Residues H194 and E275 each coordinate Fe cation.

The protein belongs to the ferrochelatase family. In terms of assembly, monomer.

It is found in the cytoplasm. It carries out the reaction heme b + 2 H(+) = protoporphyrin IX + Fe(2+). It participates in porphyrin-containing compound metabolism; protoheme biosynthesis; protoheme from protoporphyrin-IX: step 1/1. Functionally, catalyzes the ferrous insertion into protoporphyrin IX. This chain is Ferrochelatase, found in Shigella boydii serotype 18 (strain CDC 3083-94 / BS512).